A 177-amino-acid polypeptide reads, in one-letter code: MARVSGAAAAEAALMRALYDEHAAVLWRYALRLTGDAAQAEDVVQETLLRAWQHPEVIGDTARPARAWLFTVARNMIIDERRSARFRNVVGSTDQSGTPEQSTPDEVNAALDRLLIADALAQLSAEHRAVIQRSYYRGWSTAQIATDLGIAEGTVKSRLHYAVRALRLTLQELGVTR.

The interval 18–85 (LYDEHAAVLW…MIIDERRSAR (68 aa)) is sigma-70 factor domain-2. Residues 42–45 (DVVQ) carry the Interaction with polymerase core subunit RpoC motif. The interval 119–167 (ALAQLSAEHRAVIQRSYYRGWSTAQIATDLGIAEGTVKSRLHYAVRALR) is sigma-70 factor domain-4. Residues 141 to 160 (TAQIATDLGIAEGTVKSRLH) constitute a DNA-binding region (H-T-H motif).

The protein belongs to the sigma-70 factor family. ECF subfamily. As to quaternary structure, interacts transiently with the RNA polymerase catalytic core formed by RpoA, RpoB, RpoC and RpoZ (2 alpha, 1 beta, 1 beta' and 1 omega subunit) to form the RNA polymerase holoenzyme that can initiate transcription. Interacts (via sigma-70 factor domain 4) with anti-sigma-L factor RslA.

Sigma factors are initiation factors that promote the attachment of RNA polymerase to specific initiation sites and are then released. Extracytoplasmic function (ECF) sigma factors are held in an inactive form by an anti-sigma factor until released by regulated intramembrane proteolysis. This chain is ECF RNA polymerase sigma factor SigL (sigL), found in Mycobacterium tuberculosis (strain ATCC 35801 / TMC 107 / Erdman).